The chain runs to 295 residues: Ethanolamine ammonia-lyase small subunit (295 aa).

Adenosylcob(III)alamin contacts are provided by Val-207, Glu-228, and Cys-258.

This sequence belongs to the EutC family. As to quaternary structure, the basic unit is a heterodimer which dimerizes to form tetramers. The heterotetramers trimerize; 6 large subunits form a core ring with 6 small subunits projecting outwards. Requires adenosylcob(III)alamin as cofactor.

It localises to the bacterial microcompartment. It catalyses the reaction ethanolamine = acetaldehyde + NH4(+). It functions in the pathway amine and polyamine degradation; ethanolamine degradation. Functionally, catalyzes the deamination of various vicinal amino-alcohols to oxo compounds. Allows this organism to utilize ethanolamine as the sole source of nitrogen and carbon in the presence of external vitamin B12. The chain is Ethanolamine ammonia-lyase small subunit from Escherichia coli O139:H28 (strain E24377A / ETEC).